Consider the following 329-residue polypeptide: Quinolinate synthase (329 aa).

The iminosuccinate site is built by H44 and S61. Residue C106 coordinates [4Fe-4S] cluster. Iminosuccinate is bound by residues 132–134 (YIN) and S149. Residue C192 coordinates [4Fe-4S] cluster. Residues 218 to 220 (HPE) and T235 each bind iminosuccinate. [4Fe-4S] cluster is bound at residue C285.

The protein belongs to the quinolinate synthase family. Type 2 subfamily. The cofactor is [4Fe-4S] cluster.

It is found in the plastid. Its subcellular location is the cyanelle. It catalyses the reaction iminosuccinate + dihydroxyacetone phosphate = quinolinate + phosphate + 2 H2O + H(+). It functions in the pathway cofactor biosynthesis; NAD(+) biosynthesis; quinolinate from iminoaspartate: step 1/1. In terms of biological role, catalyzes the condensation of iminoaspartate with dihydroxyacetone phosphate to form quinolinate. The protein is Quinolinate synthase of Cyanophora paradoxa.